A 140-amino-acid chain; its full sequence is UPF0134 protein MPN_094 (140 aa).

The protein belongs to the UPF0134 family.

This chain is UPF0134 protein MPN_094, found in Mycoplasma pneumoniae (strain ATCC 29342 / M129 / Subtype 1) (Mycoplasmoides pneumoniae).